The sequence spans 571 residues: OTU domain-containing protein 5 (571 aa).

2 disordered regions span residues 1-111 (MTIL…GPGG) and 146-175 (PGHS…GAGY). A compositionally biased stretch (pro residues) spans 11–30 (PPDADPANEPPPPGPMPPAP). Residues 32–47 (RGGGVGVGGGGTGVGG) show a composition bias toward gly residues. The segment covering 63 to 75 (ASPPPQGPLPGPP) has biased composition (pro residues). The residue at position 64 (Ser64) is a Phosphoserine. Residues 84–97 (AVPPGAVAGPRPQQ) are compositionally biased toward low complexity. Position 165 is a phosphoserine (Ser165). A Phosphotyrosine modification is found at Tyr175. Ser177 bears the Phosphoserine mark. At Thr195 the chain carries Phosphothreonine. Residues 213 to 341 (FIIKQMKEDG…NIHYNSVVNP (129 aa)) enclose the OTU domain. Residues 218-224 (MKEDGAC) form a cys-loop region. Asp221 is a catalytic residue. The active-site Nucleophile is Cys224. A variable-loop region spans residues 273 to 283 (KRKNNCHGNHI). Phosphoserine; by MTOR is present on Ser328. The tract at residues 329-334 (YHRNIH) is his-loop. Residue His334 is part of the active site. Phosphoserine is present on residues Ser337 and Ser375. The segment at 418–502 (ARQVRGPSQP…PGTSSQFSAG (85 aa)) is disordered. Composition is skewed to low complexity over residues 430-443 (ASAT…AASS) and 450-462 (SRSP…ASSP). Ser452 carries the post-translational modification Phosphoserine. A Phosphothreonine modification is found at Thr507. Ser508 bears the Phosphoserine; by MTOR mark.

Belongs to the peptidase C85 family. As to quaternary structure, interacts with TRAF3. In terms of processing, phosphorylation at Ser-177 is required for deubiquitinating activity. Phosphorylation at Ser-328, Ser-337 and Ser-508 by MTOR promotes its activity. As to expression, expressed in various tissues, including the liver and placenta, as well as in peripheral blood leukocytes.

The protein resides in the nucleus. The enzyme catalyses Thiol-dependent hydrolysis of ester, thioester, amide, peptide and isopeptide bonds formed by the C-terminal Gly of ubiquitin (a 76-residue protein attached to proteins as an intracellular targeting signal).. Inhibited by N-ethyl-maleimide (NEM). Functionally, deubiquitinating enzyme that functions as a negative regulator of the innate immune system. Has peptidase activity towards 'Lys-48'- and 'Lys-63'-linked polyubiquitin chains. Can also cleave 'Lys-11'-linked ubiquitin chains (in vitro). Acts via TRAF3 deubiquitination and subsequent suppression of type I interferon (IFN) production. Controls neuroectodermal differentiation through cleaving 'Lys-48'-linked ubiquitin chains to counteract degradation of select chromatin regulators such as ARID1A, HDAC2 and HCF1. Acts as a positive regulator of mTORC1 and mTORC2 signaling following phosphorylation by MTOR: acts by mediating deubiquitination of BTRC, leading to its stability. The sequence is that of OTU domain-containing protein 5 from Homo sapiens (Human).